The following is a 336-amino-acid chain: Ribosomal RNA large subunit methyltransferase F (336 aa).

This sequence belongs to the methyltransferase superfamily. METTL16/RlmF family.

It localises to the cytoplasm. It catalyses the reaction adenosine(1618) in 23S rRNA + S-adenosyl-L-methionine = N(6)-methyladenosine(1618) in 23S rRNA + S-adenosyl-L-homocysteine + H(+). Functionally, specifically methylates the adenine in position 1618 of 23S rRNA. This Yersinia pestis bv. Antiqua (strain Angola) protein is Ribosomal RNA large subunit methyltransferase F.